A 217-amino-acid chain; its full sequence is Adenylate kinase (217 aa).

ATP is bound at residue 10–15 (GAGKGT). The segment at 30 to 59 (STGDMFRAAIKAGTALGMKAKEYMDAGSLV) is NMP. AMP contacts are provided by residues Thr-31, Arg-36, 57–59 (SLV), 85–88 (GFPR), and Gln-92. An LID region spans residues 126-163 (GRRICRQCGGTYHMVFNPPAAEAVCDKCGGELYQRSDD). Residue Arg-127 coordinates ATP. Residues Cys-130 and Cys-133 each coordinate Zn(2+). 136–137 (TY) serves as a coordination point for ATP. Cys-150 and Cys-153 together coordinate Zn(2+). AMP-binding residues include Arg-160 and Arg-171. Gln-199 lines the ATP pocket.

The protein belongs to the adenylate kinase family. Monomer.

The protein resides in the cytoplasm. The catalysed reaction is AMP + ATP = 2 ADP. The protein operates within purine metabolism; AMP biosynthesis via salvage pathway; AMP from ADP: step 1/1. Its function is as follows. Catalyzes the reversible transfer of the terminal phosphate group between ATP and AMP. Plays an important role in cellular energy homeostasis and in adenine nucleotide metabolism. The protein is Adenylate kinase of Desulfitobacterium hafniense (strain DSM 10664 / DCB-2).